Consider the following 416-residue polypeptide: Gasdermin-B (416 aa).

A triggers pyroptosis region spans residues 1-280; that stretch reads MFSVFEEITR…EKRKDVLNSL (280 aa). The next 2 membrane-spanning stretches (beta stranded) occupy residues 83–101 and 102–125; these read EFQI…VRLP and KEIT…ENRI. (Microbial infection) Glycyl lysine isopeptide (Lys-Gly) (interchain with G-Cter in ubiquitin) cross-links involve residues lysine 166, lysine 177, lysine 190, and lysine 192. Beta stranded transmembrane passes span 167 to 183 and 184 to 198; these read EETL…SQIS and QGHL…REVT. The interval 229 to 250 is disordered; sequence KSFPEEKDGASSCLGKSLGSED. A coiled-coil region spans residues 248–276; sequence SEDSRNMKEKLEDMESVLKDLTEEKRKDV. Residue methionine 308 forms a (Microbial infection) Glycyl lysine isopeptide (Lys-Gly) (interchain with G-Cter in ubiquitin) linkage.

The protein belongs to the gasdermin family. As to quaternary structure, homooligomer; homooligomeric ring-shaped pore complex containing 24-26 subunits when inserted in the membrane. In terms of processing, cleavage by granzyme A (GZMA) relieves autoinhibition by releasing the N-terminal moiety (Gasdermin-B, N-terminal) that initiates pyroptosis. Not cleaved by other granzymes. Major cleavage site takes places after Lys-244; a minor cleavage site takes place after Lys-229. Cleavage by neutrophil elastase ELANE, inhibits its ability to trigger pyroptosis. Palmitoylated. Post-translationally, (Microbial infection) Ubiquitinated by S.flexneri IpaH7.8, leading to its degradation by the proteasome, thereby preventing its ability to form pores in bacterial-derived membranes. As to expression, in the gastrointestinal tract, expressed in proliferating cells, including in the basal cell layer of esophagus and in isthmus/neck of stomach.

It is found in the cytoplasm. It localises to the cell membrane. The full-length protein before cleavage is inactive: intramolecular interactions between N- and C-terminal domains mediate autoinhibition in the absence of activation signal. The intrinsic pyroptosis-inducing activity is carried by the released N-terminal moiety (Gasdermin-B, N-terminal) following cleavage by granzyme A (GZMA). Precursor of a pore-forming protein that acts as a downstream mediator of granzyme-mediated cell death. This form constitutes the precursor of the pore-forming protein: upon cleavage, the released N-terminal moiety (Gasdermin-B, N-terminal) binds to membranes and forms pores, triggering pyroptosis. Also acts as a regulator of epithelial cell repair independently of programmed cell death: translocates to the plasma membrane and promotes epithelial maintenance and repair by regulating PTK2/FAK-mediated phosphorylation of PDGFA. Functionally, pore-forming protein produced by cleavage by granzyme A (GZMA), which causes membrane permeabilization and pyroptosis in target cells of cytotoxic T and natural killer (NK) cells. Key downstream mediator of granzyme-mediated cell death: (1) granzyme A (GZMA), delivered to target cells from cytotoxic T- and NK-cells, (2) specifically cleaves Gasdermin-B to generate this form. After cleavage, moves to the plasma membrane, homooligomerizes within the membrane and forms pores of 10-15 nanometers (nm) of inner diameter, triggering pyroptosis. The different isoforms recognize and bind different phospholipids on membranes, promoting cell death of different target cells. In terms of biological role, precursor of a pore-forming protein that acts as a downstream mediator of granzyme-mediated cell death and mediates pyroptosis. Following cleavage and activation by granzyme A (GZMA), the N-terminal part binds to membrane inner leaflet lipids, homooligomerizes within the human plasma membrane and forms pores of 10-15 nanometers (nm) of inner diameter, triggering pyroptosis. Recognizes and binds membrane inner leaflet lipids of human cells, such as phosphatidylinositol 4-phosphate, phosphatidylinositol 5-phosphate, bisphosphorylated phosphatidylinositols, such as phosphatidylinositol (4,5)-bisphosphate, and more weakly to phosphatidic acid. Also binds sufatide, a component of the apical membrane of epithelial cells. Its function is as follows. Precursor of a pore-forming protein that acts as a downstream mediator of granzyme-mediated cell death and mediates pyroptosis of human cells. Following cleavage and activation by granzyme A (GZMA), the N-terminal part binds to membrane inner leaflet lipids, homooligomerizes within the human plasma membrane and forms pores of 10-15 nanometers (nm) of inner diameter, triggering pyroptosis. Precursor of a pore-forming protein that acts as a downstream mediator of granzyme-mediated cell death and specifically mediates cell death of Gram-negative bacteria in response to infection. Following cleavage and activation by granzyme A (GZMA), the N-terminal part recognizes and binds phospholipids found on Gram-negative bacterial membranes, such as lipid A and cariolipin, homooligomerizes within the bacterial membranes and forms pores, triggering pyroptosis followed by cell death. In contrast to isoform 4, does not bind to membrane inner leaflet lipids of host human cell, such as phosphatidylinositol 4-phosphate, phosphatidylinositol 5-phosphate, bisphosphorylated phosphatidylinositols, such as phosphatidylinositol (4,5)-bisphosphate. Functionally, not able to trigger pyroptosis. The sequence is that of Gasdermin-B from Homo sapiens (Human).